The chain runs to 71 residues: MFTLKKSFLLLFFLGTITLSLCEQERGADEDDGVEMTEEEVKRGLLDTIKNTAKNLAVGLLDKIKCKMTGC.

The N-terminal stretch at 1 to 22 (MFTLKKSFLLLFFLGTITLSLC) is a signal peptide. Residues 23-43 (EQERGADEDDGVEMTEEEVKR) constitute a propeptide that is removed on maturation. C66 and C71 are oxidised to a cystine.

Expressed by the skin glands.

Its subcellular location is the secreted. Antimicrobial peptide. This is Ranatuerin-2Va from Odorrana versabilis (Chinese bamboo leaf odorous frog).